The primary structure comprises 94 residues: MFGLINIGFGNVIAGDRIVAIVNPESAPLKRLKEDAKEEGKLIDATYGRKTRAILISDSNHIILSAIQPETIAQRFMQSFFEIEEQLERIRRKG.

Belongs to the RemA family.

The chain is Putative regulatory protein Tmel_0100 from Thermosipho melanesiensis (strain DSM 12029 / CIP 104789 / BI429).